Here is a 219-residue protein sequence, read N- to C-terminus: Adenylate kinase (219 aa).

Residue 12–17 (GAGKGT) participates in ATP binding. An NMP region spans residues 32 to 61 (STGDMLRAAVKAGTPIGLQAKAVMDAGELV). Residues threonine 33, arginine 38, 59–61 (ELV), 87–90 (GYPR), and glutamine 94 contribute to the AMP site. Positions 128 to 165 (GRFSCARCGEGYHDRYKLPKVADICDVCGSKEFKRRPD) are LID. Position 129 (arginine 129) interacts with ATP. Cysteine 132, cysteine 135, cysteine 152, and cysteine 155 together coordinate Zn(2+). AMP is bound by residues arginine 162 and arginine 174. Residue alanine 202 participates in ATP binding.

This sequence belongs to the adenylate kinase family. Monomer.

The protein resides in the cytoplasm. It carries out the reaction AMP + ATP = 2 ADP. It functions in the pathway purine metabolism; AMP biosynthesis via salvage pathway; AMP from ADP: step 1/1. In terms of biological role, catalyzes the reversible transfer of the terminal phosphate group between ATP and AMP. Plays an important role in cellular energy homeostasis and in adenine nucleotide metabolism. This is Adenylate kinase from Sphingopyxis alaskensis (strain DSM 13593 / LMG 18877 / RB2256) (Sphingomonas alaskensis).